Reading from the N-terminus, the 197-residue chain is Putative carbonic anhydrase YvdA (197 aa).

Positions 41, 43, 99, and 102 each coordinate Zn(2+).

This sequence belongs to the beta-class carbonic anhydrase family. Requires Zn(2+) as cofactor.

The enzyme catalyses hydrogencarbonate + H(+) = CO2 + H2O. Its function is as follows. Reversible hydration of carbon dioxide. The sequence is that of Putative carbonic anhydrase YvdA (yvdA) from Bacillus subtilis (strain 168).